The following is a 149-amino-acid chain: MRIMGLDVGDKTIGVAVSDLMGWTAQGVATIRRSRLAADLEHLRELVKTYEVERIVCGLPRNMNGTYGPRAEGIRKFGSLVEKKLNIPVDYWDERLTTVAAQKTLIAGDLSRAKRKQVVDKLAAVLILQNYMDAKAHLAAKEQSKETSE.

Belongs to the YqgF nuclease family.

The protein localises to the cytoplasm. In terms of biological role, could be a nuclease involved in processing of the 5'-end of pre-16S rRNA. This is Putative pre-16S rRNA nuclease from Heliobacterium modesticaldum (strain ATCC 51547 / Ice1).